A 432-amino-acid polypeptide reads, in one-letter code: Proline--tRNA ligase (432 aa).

This sequence belongs to the class-II aminoacyl-tRNA synthetase family. ProS type 2 subfamily. As to quaternary structure, homodimer.

It localises to the cytoplasm. It carries out the reaction tRNA(Pro) + L-proline + ATP = L-prolyl-tRNA(Pro) + AMP + diphosphate. Its function is as follows. Catalyzes the attachment of proline to tRNA(Pro) in a two-step reaction: proline is first activated by ATP to form Pro-AMP and then transferred to the acceptor end of tRNA(Pro). This chain is Proline--tRNA ligase, found in Rickettsia prowazekii (strain Madrid E).